A 298-amino-acid polypeptide reads, in one-letter code: MSTATGGLLLVHAHPDDETITTGGTIARYRARGVPVTVVTCTLGEEGEVIGEQWAQLAADRADQLGGYRILELTRALDALDAGPPRFLGGAGRWRDSGMAGTPSAEHPRAFVNSGPEAVEALVEVLLDLRPRVVVGYDPNGGYGHPDHIRAHRVTTEAVRAAAERGWDVPKFYWTVTDADMLRLHTEALARRTAAGLPGALPRGWRLPAADELACVASDTVTTTVDVAEVLAAKRAALRAHATQITVAPSGREFALSNNIAQPVLPEEHYVLVRGRRGPAGPDGREHDLFAGLDGPAT.

Residues H14, D17, and H148 each contribute to the Zn(2+) site. Positions 277-298 (RGPAGPDGREHDLFAGLDGPAT) are disordered.

The protein belongs to the MshB deacetylase family. Zn(2+) serves as cofactor.

The enzyme catalyses 1D-myo-inositol 2-acetamido-2-deoxy-alpha-D-glucopyranoside + H2O = 1D-myo-inositol 2-amino-2-deoxy-alpha-D-glucopyranoside + acetate. Its function is as follows. Catalyzes the deacetylation of 1D-myo-inositol 2-acetamido-2-deoxy-alpha-D-glucopyranoside (GlcNAc-Ins) in the mycothiol biosynthesis pathway. The polypeptide is 1D-myo-inositol 2-acetamido-2-deoxy-alpha-D-glucopyranoside deacetylase (Nocardia farcinica (strain IFM 10152)).